The following is a 645-amino-acid chain: Threonine--tRNA ligase (645 aa).

The TGS domain maps to 1-63; the sequence is MEQINIQFPD…ETDGSIEIVT (63 aa). Positions 242 to 540 are catalytic; it reads DHRKIGKELE…LTEETKGAFP (299 aa). Zn(2+)-binding residues include Cys-336, His-387, and His-517.

Belongs to the class-II aminoacyl-tRNA synthetase family. Homodimer. Requires Zn(2+) as cofactor.

Its subcellular location is the cytoplasm. The enzyme catalyses tRNA(Thr) + L-threonine + ATP = L-threonyl-tRNA(Thr) + AMP + diphosphate + H(+). In terms of biological role, catalyzes the attachment of threonine to tRNA(Thr) in a two-step reaction: L-threonine is first activated by ATP to form Thr-AMP and then transferred to the acceptor end of tRNA(Thr). Also edits incorrectly charged L-seryl-tRNA(Thr). In Staphylococcus aureus (strain NCTC 8325 / PS 47), this protein is Threonine--tRNA ligase.